Reading from the N-terminus, the 56-residue chain is Large ribosomal subunit protein bL33c (56 aa).

The protein belongs to the bacterial ribosomal protein bL33 family.

Its subcellular location is the plastid. The protein resides in the chloroplast. The sequence is that of Large ribosomal subunit protein bL33c from Rhodomonas salina (Cryptomonas salina).